Consider the following 81-residue polypeptide: MVSIRLSRGGSKKRPFYHLTVTDSRSARDGAFIERLGFFNPIARGQEERLRVDNERLEYWKGQGAQMSDRVAKLIKDAAAA.

It belongs to the bacterial ribosomal protein bS16 family.

The protein is Small ribosomal subunit protein bS16 of Teredinibacter turnerae (strain ATCC 39867 / T7901).